The following is a 248-amino-acid chain: ATP synthase subunit a, chloroplastic (248 aa).

The next 5 membrane-spanning stretches (helical) occupy residues 38–58, 96–116, 135–155, 200–220, and 221–241; these read QVLI…TLAV, VPFI…GALF, INTT…AGFT, LVVA…VMFL, and GLFT…AYIG.

The protein belongs to the ATPase A chain family. In terms of assembly, F-type ATPases have 2 components, CF(1) - the catalytic core - and CF(0) - the membrane proton channel. CF(1) has five subunits: alpha(3), beta(3), gamma(1), delta(1), epsilon(1). CF(0) has four main subunits: a, b, b' and c.

The protein resides in the plastid. Its subcellular location is the chloroplast thylakoid membrane. Functionally, key component of the proton channel; it plays a direct role in the translocation of protons across the membrane. In Cryptomeria japonica (Japanese cedar), this protein is ATP synthase subunit a, chloroplastic.